Here is a 979-residue protein sequence, read N- to C-terminus: Protocadherin alpha-9 (979 aa).

A signal peptide spans 1–59; it reads MRLGNRPEDIRTCVHLRWHIHGLLRQENASVVISKCLRHGAWRLLLWLLLLATWDVGSG. Over 60–726 the chain is Extracellular; that stretch reads QLHYSVPEEA…RREASLMDVN (667 aa). Cadherin domains follow at residues 64-163, 164-272, 273-380, 381-485, 486-595, and 611-707; these read SVPE…PPIF, SVAE…APVF, DRSV…APEI, VLTS…APAF, AHPE…PPTL, and VSRS…VPKA. N-linked (GlcNAc...) asparagine glycosylation is found at asparagine 287 and asparagine 295. Asparagine 578 carries N-linked (GlcNAc...) asparagine glycosylation. The chain crosses the membrane as a helical span at residues 727–747; the sequence is VYLIIAICAVSSLLVLTLLLY. Residues 748–979 are Cytoplasmic-facing; the sequence is TALRCSAVPM…GNSTTDNSDQ (232 aa). PXXP repeat units lie at residues 763–766, 828–831, 861–864, 902–905, and 920–923; these read LGKP, PRQP, PGGP, PGNP, and PGSP. Residues 763–923 form a 5 X 4 AA repeats of P-X-X-P region; that stretch reads LGKPTLVCSS…PDKFIIPGSP (161 aa). Residues 859 to 979 are disordered; sequence AGPGGPDQQW…GNSTTDNSDQ (121 aa). A compositionally biased stretch (basic and acidic residues) spans 938-952; it reads DKSDFITFGKKEETK.

The protein localises to the cell membrane. In terms of biological role, potential calcium-dependent cell-adhesion protein. May be involved in the establishment and maintenance of specific neuronal connections in the brain. This chain is Protocadherin alpha-9, found in Mus musculus (Mouse).